Reading from the N-terminus, the 295-residue chain is ATP-dependent (S)-NAD(P)H-hydrate dehydratase (295 aa).

One can recognise a YjeF C-terminal domain in the interval 9–289 (LLERARNLVP…DQIHQVFDDL (281 aa)). Residues Gly-109 and 162–168 (NAIEFCR) contribute to the (6S)-NADPHX site. Residues 193–197 (KGLND) and 214–223 (GSGRRCGGQG) contribute to the ATP site. (6S)-NADPHX is bound at residue Asp-224.

The protein belongs to the NnrD/CARKD family. The cofactor is Mg(2+).

The catalysed reaction is (6S)-NADHX + ATP = ADP + phosphate + NADH + H(+). It carries out the reaction (6S)-NADPHX + ATP = ADP + phosphate + NADPH + H(+). Catalyzes the dehydration of the S-form of NAD(P)HX at the expense of ATP, which is converted to ADP. Together with NAD(P)HX epimerase, which catalyzes the epimerization of the S- and R-forms, the enzyme allows the repair of both epimers of NAD(P)HX, a damaged form of NAD(P)H that is a result of enzymatic or heat-dependent hydration. The polypeptide is ATP-dependent (S)-NAD(P)H-hydrate dehydratase (Anopheles darlingi (Mosquito)).